We begin with the raw amino-acid sequence, 386 residues long: Patatin-17 (386 aa).

The first 23 residues, 1-23 (MATTKSFLILIFMILATTSSTFA), serve as a signal peptide directing secretion. In terms of domain architecture, PNPLA spans 32-229 (LSIDGGGIRG…TVADPALLSI (198 aa)). The GXGXXG motif lies at 36–41 (GGGIRG). The short motif at 75 to 79 (GTSTG) is the GXSXG element. The active-site Nucleophile is the S77. The N-linked (GlcNAc...) asparagine glycan is linked to N202. The Proton acceptor role is filled by D215. The short motif at 215-217 (DGA) is the DGA/G element. Residues 321-384 (ENALTGTTTE…DRKKLRANKA (64 aa)) adopt a coiled-coil conformation.

This sequence belongs to the patatin family.

Its subcellular location is the vacuole. In terms of biological role, non-specific lipolytic acyl hydrolase (LAH), an activity which is thought to be involved in the response of tubers to pathogens. Catalyzes the non-specific hydrolysis of phospholipids, glycolipids, sulfolipids, and mono- and diacylglycerols includng p-nitrophenyl caprate. Confers resistance to southern corn rootworm (SCRW). The sequence is that of Patatin-17 from Solanum cardiophyllum (Heartleaf nightshade).